A 251-amino-acid polypeptide reads, in one-letter code: Triosephosphate isomerase (251 aa).

Residue 9–11 (NWK) coordinates substrate. The Electrophile role is filled by His96. Glu166 acts as the Proton acceptor in catalysis. Substrate-binding positions include Gly172, Ser212, and 233 to 234 (GG).

It belongs to the triosephosphate isomerase family. Homodimer.

The protein resides in the cytoplasm. It catalyses the reaction D-glyceraldehyde 3-phosphate = dihydroxyacetone phosphate. Its pathway is carbohydrate biosynthesis; gluconeogenesis. It participates in carbohydrate degradation; glycolysis; D-glyceraldehyde 3-phosphate from glycerone phosphate: step 1/1. In terms of biological role, involved in the gluconeogenesis. Catalyzes stereospecifically the conversion of dihydroxyacetone phosphate (DHAP) to D-glyceraldehyde-3-phosphate (G3P). In Pelodictyon phaeoclathratiforme (strain DSM 5477 / BU-1), this protein is Triosephosphate isomerase.